Here is a 237-residue protein sequence, read N- to C-terminus: Pyridoxine 5'-phosphate synthase (237 aa).

Positions 7 and 18 each coordinate 3-amino-2-oxopropyl phosphate. The active-site Proton acceptor is His-43. Arg-45 and His-50 together coordinate 1-deoxy-D-xylulose 5-phosphate. The Proton acceptor role is filled by Glu-70. Thr-100 is a binding site for 1-deoxy-D-xylulose 5-phosphate. Residue His-190 is the Proton donor of the active site. 3-amino-2-oxopropyl phosphate contacts are provided by residues Asp-191 and Gly-213–His-214.

This sequence belongs to the PNP synthase family. As to quaternary structure, homooctamer; tetramer of dimers.

It localises to the cytoplasm. The enzyme catalyses 3-amino-2-oxopropyl phosphate + 1-deoxy-D-xylulose 5-phosphate = pyridoxine 5'-phosphate + phosphate + 2 H2O + H(+). The protein operates within cofactor biosynthesis; pyridoxine 5'-phosphate biosynthesis; pyridoxine 5'-phosphate from D-erythrose 4-phosphate: step 5/5. Functionally, catalyzes the complicated ring closure reaction between the two acyclic compounds 1-deoxy-D-xylulose-5-phosphate (DXP) and 3-amino-2-oxopropyl phosphate (1-amino-acetone-3-phosphate or AAP) to form pyridoxine 5'-phosphate (PNP) and inorganic phosphate. In Flavobacterium johnsoniae (strain ATCC 17061 / DSM 2064 / JCM 8514 / BCRC 14874 / CCUG 350202 / NBRC 14942 / NCIMB 11054 / UW101) (Cytophaga johnsonae), this protein is Pyridoxine 5'-phosphate synthase.